Reading from the N-terminus, the 631-residue chain is 1-deoxy-D-xylulose-5-phosphate synthase (631 aa).

Residues His73, 113–115, Asn174, Tyr285, and Glu367 each bind thiamine diphosphate; that span reads SHA. Residue Asn174 participates in Mg(2+) binding.

This sequence belongs to the transketolase family. DXPS subfamily. Homodimer. It depends on Mg(2+) as a cofactor. The cofactor is thiamine diphosphate.

The enzyme catalyses D-glyceraldehyde 3-phosphate + pyruvate + H(+) = 1-deoxy-D-xylulose 5-phosphate + CO2. It functions in the pathway metabolic intermediate biosynthesis; 1-deoxy-D-xylulose 5-phosphate biosynthesis; 1-deoxy-D-xylulose 5-phosphate from D-glyceraldehyde 3-phosphate and pyruvate: step 1/1. In terms of biological role, catalyzes the acyloin condensation reaction between C atoms 2 and 3 of pyruvate and glyceraldehyde 3-phosphate to yield 1-deoxy-D-xylulose-5-phosphate (DXP). This is 1-deoxy-D-xylulose-5-phosphate synthase from Streptomyces sp. (strain CL190).